A 1358-amino-acid polypeptide reads, in one-letter code: DNA-directed RNA polymerase subunit beta (1358 aa).

It belongs to the RNA polymerase beta chain family. As to quaternary structure, the RNAP catalytic core consists of 2 alpha, 1 beta, 1 beta' and 1 omega subunit. When a sigma factor is associated with the core the holoenzyme is formed, which can initiate transcription.

The enzyme catalyses RNA(n) + a ribonucleoside 5'-triphosphate = RNA(n+1) + diphosphate. DNA-dependent RNA polymerase catalyzes the transcription of DNA into RNA using the four ribonucleoside triphosphates as substrates. The protein is DNA-directed RNA polymerase subunit beta of Francisella tularensis subsp. mediasiatica (strain FSC147).